The following is a 621-amino-acid chain: MDFDAIVIGGGHAGIEAALALSRLDFKTLMITQNLDTIGKLSCNPAIGGLAKGNMVREIDALGGEMGRIIDFSMIQFRVLNKSRGPAVQAPRAQADKLMYQTKAKETLERQDNLDLFQDTVVDFLLNSMRNEIKGVVTERGNKFRSNVVVLTTGTFLRGKIFIGEYRANMGRLAEFSAYGLDKTLLSLGFEMGRLKTGTPARIHKKSVDFSKTEVQFGDSDIIPFSFSNGNLDKSQLSCYVTYTNKRTHEIISENMHLSPLYSGEIVGNGPRYCPSIEDKIVKFKDKDRHQIFIEPEGFNTEEMYLNGLSSSLPENIQQKFINSIEGLEHAIITRPGYAVEYDYINPIELYPNLESKRVKGLFVAGQTNGSSGYEEAAAQGLMAGINAALRLQNKKPMILTRTSSYIGVLIDDLVTKGTKEPYRMFTSRAEHRLNLRHDTSDKRLIKIGYDLGLVDEERYSKYLFKKRRVEEIKELLKQRRLSLKDVADEQLKKHVSKDFYHILKDPSISLDNLIKIDPSLSDSKVILEQVELDVKYEGYINRQKDLIKKLNNLELVKLPFDFNYEIIEGLSREAREKFSKVQPATLAQASRIPGIRNTDITVLFIYFSNPKNKVVLNFSL.

Residue 9 to 14 participates in FAD binding; the sequence is GGGHAG. 270 to 284 serves as a coordination point for NAD(+); sequence GPRYCPSIEDKIVKF.

Belongs to the MnmG family. As to quaternary structure, homodimer. Heterotetramer of two MnmE and two MnmG subunits. It depends on FAD as a cofactor.

It localises to the cytoplasm. NAD-binding protein involved in the addition of a carboxymethylaminomethyl (cmnm) group at the wobble position (U34) of certain tRNAs, forming tRNA-cmnm(5)s(2)U34. The chain is tRNA uridine 5-carboxymethylaminomethyl modification enzyme MnmG from Borrelia garinii subsp. bavariensis (strain ATCC BAA-2496 / DSM 23469 / PBi) (Borreliella bavariensis).